Here is a 421-residue protein sequence, read N- to C-terminus: Serine--tRNA ligase (421 aa).

230 to 232 (TAE) is an L-serine binding site. Residue 259 to 261 (RRE) coordinates ATP. Residue Glu-282 coordinates L-serine. 346–349 (EISS) serves as a coordination point for ATP. Ser-380 is an L-serine binding site.

This sequence belongs to the class-II aminoacyl-tRNA synthetase family. Type-1 seryl-tRNA synthetase subfamily. Homodimer. The tRNA molecule binds across the dimer.

Its subcellular location is the cytoplasm. It catalyses the reaction tRNA(Ser) + L-serine + ATP = L-seryl-tRNA(Ser) + AMP + diphosphate + H(+). It carries out the reaction tRNA(Sec) + L-serine + ATP = L-seryl-tRNA(Sec) + AMP + diphosphate + H(+). It participates in aminoacyl-tRNA biosynthesis; selenocysteinyl-tRNA(Sec) biosynthesis; L-seryl-tRNA(Sec) from L-serine and tRNA(Sec): step 1/1. Functionally, catalyzes the attachment of serine to tRNA(Ser). Is also able to aminoacylate tRNA(Sec) with serine, to form the misacylated tRNA L-seryl-tRNA(Sec), which will be further converted into selenocysteinyl-tRNA(Sec). The sequence is that of Serine--tRNA ligase from Methanosarcina acetivorans (strain ATCC 35395 / DSM 2834 / JCM 12185 / C2A).